The primary structure comprises 72 residues: UPF0270 protein YheU (72 aa).

Belongs to the UPF0270 family.

In Salmonella agona (strain SL483), this protein is UPF0270 protein YheU.